A 528-amino-acid chain; its full sequence is Poly(A) RNA polymerase GLD2 (528 aa).

2 disordered regions span residues 1–41 (MYPN…QPQQ) and 99–121 (RDQS…KRRS). Low complexity-rich tracts occupy residues 16–32 (PCEQ…EQPL) and 102–113 (SPLISPASPSSS). Positions 259 and 261 each coordinate Mg(2+). One can recognise a PAP-associated domain in the interval 428-481 (LGDLLLGFLKYFAIEFDWSKDIISVREAKALPRSDDYEWRNKFICVEEPYDRTN).

The protein belongs to the DNA polymerase type-B-like family. GLD2 subfamily. Component of a complex at least composed of cpeb1, cpsf1, tent2/gld2, pabpc1/ePAB, parn and sympk. Following oocyte maturation, parn is expelled from the complex. Interacts with rbm9 and sympk. It depends on Mg(2+) as a cofactor. Requires Mn(2+) as cofactor.

The protein resides in the cytoplasm. It carries out the reaction RNA(n) + ATP = RNA(n)-3'-adenine ribonucleotide + diphosphate. Its function is as follows. Cytoplasmic poly(A) RNA polymerase that adds successive AMP monomers to the 3'-end of specific RNAs, forming a poly(A) tail. In contrast to the canonical nuclear poly(A) RNA polymerase, it only adds poly(A) to selected cytoplasmic mRNAs during oocyte maturation. Plays a central role during oocyte maturation by mediating polyadenylation of dormant mRNAs, which contain 5'AAUAAA-3' sequence in their 3'-UTR. In immature oocytes, polyadenylation of poly(A) tails is counteracted by the ribonuclease parn. During maturation parn is excluded from the ribonucleoprotein complex, allowing poly(A) elongation and activation of mRNAs. May not play a role in replication-dependent histone mRNA degradation. The sequence is that of Poly(A) RNA polymerase GLD2 (tent2) from Xenopus tropicalis (Western clawed frog).